A 648-amino-acid polypeptide reads, in one-letter code: Serine/threonine-protein kinase DCLK3 (648 aa).

Disordered regions lie at residues 86 to 127 and 150 to 345; these read DDRA…HLGV and QSLE…PRPM. 5 stretches are compositionally biased toward basic and acidic residues: residues 98–127, 213–234, 255–266, 277–303, and 312–338; these read GKWE…HLGV, ELRR…DQES, EGLREVKKDTRP, LREH…EKKP, and TLRD…ERPS. The region spanning 356-613 is the Protein kinase domain; the sequence is YETGRVIGDG…AHQVLQHPWI (258 aa). ATP-binding positions include 362 to 370 and K385; that span reads IGDGNFAVV. D477 (proton acceptor) is an active-site residue. The tract at residues 628-648 is disordered; sequence VSPSSEGHFRSQHKRVVEQVS.

The protein belongs to the protein kinase superfamily. CAMK Ser/Thr protein kinase family. CaMK subfamily.

The protein resides in the cytoplasm. The protein localises to the nucleus. It carries out the reaction L-seryl-[protein] + ATP = O-phospho-L-seryl-[protein] + ADP + H(+). The enzyme catalyses L-threonyl-[protein] + ATP = O-phospho-L-threonyl-[protein] + ADP + H(+). The sequence is that of Serine/threonine-protein kinase DCLK3 (DCLK3) from Homo sapiens (Human).